Reading from the N-terminus, the 259-residue chain is MITVISPAKNLDYTTPPATDKFTQPELLEHSEALMQVCRELTPAQIGSLMKISDKLSGLNAARFSEWAQPFTTENAKQAVLAFNGDVYGGLDASTLTANQLDYAQSHLRILSGLYGLLKPLDLMQAYRLEMGTKLENSRGKNLYEFWGSVIANKLNEVLKAEDAQYLVNLASNEYFKAVDKKALNAQIITPHFKDCKNGQYKVISFYAKKARGMMARYLIENKVTQLSQLKEFTVAGYYFSAEASVKELEPVFLRDEQS.

The protein belongs to the UPF0246 family.

The sequence is that of UPF0246 protein PSHAa2558 from Pseudoalteromonas translucida (strain TAC 125).